A 341-amino-acid chain; its full sequence is tRNA N6-adenosine threonylcarbamoyltransferase (341 aa).

Positions 111 and 115 each coordinate Fe cation. Substrate is bound by residues 134–138 (LVSGG), aspartate 167, glycine 180, and asparagine 272. A Fe cation-binding site is contributed by aspartate 300.

Belongs to the KAE1 / TsaD family. Requires Fe(2+) as cofactor.

It localises to the cytoplasm. The catalysed reaction is L-threonylcarbamoyladenylate + adenosine(37) in tRNA = N(6)-L-threonylcarbamoyladenosine(37) in tRNA + AMP + H(+). In terms of biological role, required for the formation of a threonylcarbamoyl group on adenosine at position 37 (t(6)A37) in tRNAs that read codons beginning with adenine. Is involved in the transfer of the threonylcarbamoyl moiety of threonylcarbamoyl-AMP (TC-AMP) to the N6 group of A37, together with TsaE and TsaB. TsaD likely plays a direct catalytic role in this reaction. The sequence is that of tRNA N6-adenosine threonylcarbamoyltransferase from Psychromonas ingrahamii (strain DSM 17664 / CCUG 51855 / 37).